Consider the following 417-residue polypeptide: Gamma-glutamyl phosphate reductase (417 aa).

Belongs to the gamma-glutamyl phosphate reductase family.

The protein localises to the cytoplasm. The catalysed reaction is L-glutamate 5-semialdehyde + phosphate + NADP(+) = L-glutamyl 5-phosphate + NADPH + H(+). The protein operates within amino-acid biosynthesis; L-proline biosynthesis; L-glutamate 5-semialdehyde from L-glutamate: step 2/2. Functionally, catalyzes the NADPH-dependent reduction of L-glutamate 5-phosphate into L-glutamate 5-semialdehyde and phosphate. The product spontaneously undergoes cyclization to form 1-pyrroline-5-carboxylate. This Shigella flexneri serotype 5b (strain 8401) protein is Gamma-glutamyl phosphate reductase.